We begin with the raw amino-acid sequence, 225 residues long: 7-cyano-7-deazaguanine synthase (225 aa).

9-19 (YSGGLDSTTCL) is a binding site for ATP. 4 residues coordinate Zn(2+): Cys188, Cys198, Cys201, and Cys204.

Belongs to the QueC family. It depends on Zn(2+) as a cofactor.

The catalysed reaction is 7-carboxy-7-deazaguanine + NH4(+) + ATP = 7-cyano-7-deazaguanine + ADP + phosphate + H2O + H(+). Its pathway is purine metabolism; 7-cyano-7-deazaguanine biosynthesis. Its function is as follows. Catalyzes the ATP-dependent conversion of 7-carboxy-7-deazaguanine (CDG) to 7-cyano-7-deazaguanine (preQ(0)). The protein is 7-cyano-7-deazaguanine synthase of Citrifermentans bemidjiense (strain ATCC BAA-1014 / DSM 16622 / JCM 12645 / Bem) (Geobacter bemidjiensis).